A 72-amino-acid polypeptide reads, in one-letter code: uncharacterized protein (72 aa).

A helical transmembrane segment spans residues 23-45; sequence ITNLLITTILLCFFNATTYWKLF.

It is found in the membrane. This is an uncharacterized protein from Schizosaccharomyces pombe (strain 972 / ATCC 24843) (Fission yeast).